The following is a 380-amino-acid chain: Probable protein phosphatase 2C 63 (380 aa).

A PPM-type phosphatase domain is found at 35–338 (DYSIAVVQAN…DDISVIVVYL (304 aa)). Mn(2+)-binding residues include aspartate 66, glycine 67, aspartate 270, and aspartate 329.

It belongs to the PP2C family. Mg(2+) serves as cofactor. Requires Mn(2+) as cofactor.

The enzyme catalyses O-phospho-L-seryl-[protein] + H2O = L-seryl-[protein] + phosphate. It carries out the reaction O-phospho-L-threonyl-[protein] + H2O = L-threonyl-[protein] + phosphate. May dephosphorylate and repress plasma membrane H(+)-ATPases (PM H(+)-ATPases, e.g. AHA1 and AHA2), thus influencing negatively plant growth and fitness. The sequence is that of Probable protein phosphatase 2C 63 from Arabidopsis thaliana (Mouse-ear cress).